The following is a 272-amino-acid chain: S-adenosylmethionine decarboxylase proenzyme (272 aa).

The Schiff-base intermediate with substrate; via pyruvic acid role is filled by Ser117. Ser117 carries the pyruvic acid (Ser); by autocatalysis modification. His122 acts as the Proton acceptor; for processing activity in catalysis. The active-site Proton donor; for catalytic activity is Cys145.

Belongs to the prokaryotic AdoMetDC family. Type 2 subfamily. As to quaternary structure, heterooctamer of four alpha and four beta chains arranged as a tetramer of alpha/beta heterodimers. Pyruvate serves as cofactor. Post-translationally, is synthesized initially as an inactive proenzyme. Formation of the active enzyme involves a self-maturation process in which the active site pyruvoyl group is generated from an internal serine residue via an autocatalytic post-translational modification. Two non-identical subunits are generated from the proenzyme in this reaction, and the pyruvate is formed at the N-terminus of the alpha chain, which is derived from the carboxyl end of the proenzyme. The post-translation cleavage follows an unusual pathway, termed non-hydrolytic serinolysis, in which the side chain hydroxyl group of the serine supplies its oxygen atom to form the C-terminus of the beta chain, while the remainder of the serine residue undergoes an oxidative deamination to produce ammonia and the pyruvoyl group blocking the N-terminus of the alpha chain.

The enzyme catalyses S-adenosyl-L-methionine + H(+) = S-adenosyl 3-(methylsulfanyl)propylamine + CO2. The protein operates within amine and polyamine biosynthesis; S-adenosylmethioninamine biosynthesis; S-adenosylmethioninamine from S-adenosyl-L-methionine: step 1/1. Its function is as follows. Catalyzes the decarboxylation of S-adenosylmethionine to S-adenosylmethioninamine (dcAdoMet), the propylamine donor required for the synthesis of the polyamines spermine and spermidine from the diamine putrescine. The chain is S-adenosylmethionine decarboxylase proenzyme from Halorhodospira halophila (strain DSM 244 / SL1) (Ectothiorhodospira halophila (strain DSM 244 / SL1)).